The chain runs to 125 residues: Large ribosomal subunit protein bL12 (125 aa).

Belongs to the bacterial ribosomal protein bL12 family. Homodimer. Part of the ribosomal stalk of the 50S ribosomal subunit. Forms a multimeric L10(L12)X complex, where L10 forms an elongated spine to which 2 to 4 L12 dimers bind in a sequential fashion. Binds GTP-bound translation factors.

In terms of biological role, forms part of the ribosomal stalk which helps the ribosome interact with GTP-bound translation factors. Is thus essential for accurate translation. The sequence is that of Large ribosomal subunit protein bL12 from Cereibacter sphaeroides (Rhodobacter sphaeroides).